Reading from the N-terminus, the 153-residue chain is 6,7-dimethyl-8-ribityllumazine synthase (153 aa).

Residues Phe-21, 55-57 (AFE), and 79-81 (TVI) each bind 5-amino-6-(D-ribitylamino)uracil. Position 84–85 (84–85 (AT)) interacts with (2S)-2-hydroxy-3-oxobutyl phosphate. Catalysis depends on His-87, which acts as the Proton donor. Phe-112 provides a ligand contact to 5-amino-6-(D-ribitylamino)uracil. Arg-126 is a binding site for (2S)-2-hydroxy-3-oxobutyl phosphate.

This sequence belongs to the DMRL synthase family. In terms of assembly, forms an icosahedral capsid composed of 60 subunits, arranged as a dodecamer of pentamers.

The enzyme catalyses (2S)-2-hydroxy-3-oxobutyl phosphate + 5-amino-6-(D-ribitylamino)uracil = 6,7-dimethyl-8-(1-D-ribityl)lumazine + phosphate + 2 H2O + H(+). It functions in the pathway cofactor biosynthesis; riboflavin biosynthesis; riboflavin from 2-hydroxy-3-oxobutyl phosphate and 5-amino-6-(D-ribitylamino)uracil: step 1/2. Functionally, catalyzes the formation of 6,7-dimethyl-8-ribityllumazine by condensation of 5-amino-6-(D-ribitylamino)uracil with 3,4-dihydroxy-2-butanone 4-phosphate. This is the penultimate step in the biosynthesis of riboflavin. The sequence is that of 6,7-dimethyl-8-ribityllumazine synthase from Bacillus cereus (strain AH187).